The primary structure comprises 285 residues: Elongation factor Ts (285 aa).

Positions 82-85 (TDFV) are involved in Mg(2+) ion dislocation from EF-Tu.

It belongs to the EF-Ts family.

The protein resides in the cytoplasm. In terms of biological role, associates with the EF-Tu.GDP complex and induces the exchange of GDP to GTP. It remains bound to the aminoacyl-tRNA.EF-Tu.GTP complex up to the GTP hydrolysis stage on the ribosome. In Yersinia pseudotuberculosis serotype O:1b (strain IP 31758), this protein is Elongation factor Ts.